We begin with the raw amino-acid sequence, 144 residues long: UPF0102 protein BPSL3274 (144 aa).

The tract at residues 1–28 (MCHAREASPGTGEPEAAPRDNFPREAGS) is disordered. Over residues 16–28 (AAPRDNFPREAGS) the composition is skewed to basic and acidic residues.

This sequence belongs to the UPF0102 family.

The sequence is that of UPF0102 protein BPSL3274 from Burkholderia pseudomallei (strain K96243).